The primary structure comprises 45 residues: Monellin chain A (45 aa).

In terms of assembly, heterodimer of an A chain and a B chain.

In terms of biological role, taste-modifying protein; intensely sweet-tasting protein. This is Monellin chain A from Dioscoreophyllum cumminsii (Serendipity berry).